A 274-amino-acid chain; its full sequence is MNKTAIALLALLASSASLAATPWQKITQPVPGSAQSIGSFSNGCIVGADTLPIQSEHYQVMRTDQRRYFGHPDLVMFIQRLSRQVSNLGMGTVLIGDMGMPAGGRFNGGHASHQTGLDVDIFLQLPKTRWTSAQLLRPQALDLVSRDGKHVVPALWKPEIFSLIKLAAQDKDVTRIFVNPAIKQQLCLDAGTDRDWLRKVRPWFQHRAHMHVRLRCPADSLECEDQPLPPPGDGCGAELQSWFEPPKPGTTKPEKKTPPPLPPSCQALLDEHVI.

The first 19 residues, 1–19 (MNKTAIALLALLASSASLA), serve as a signal peptide directing secretion. Cystine bridges form between C44–C265, C187–C235, and C216–C223. Residues H110, H113, D120, D147, H150, and H211 each coordinate Zn(2+). The interval 227 to 274 (PLPPPGDGCGAELQSWFEPPKPGTTKPEKKTPPPLPPSCQALLDEHVI) is disordered.

Belongs to the peptidase M74 family. In terms of assembly, dimer. Zn(2+) serves as cofactor.

The protein localises to the periplasm. Its function is as follows. Murein endopeptidase that cleaves the D-alanyl-meso-2,6-diamino-pimelyl amide bond that connects peptidoglycan strands. Likely plays a role in the removal of murein from the sacculus. This is Penicillin-insensitive murein endopeptidase from Escherichia coli O1:K1 / APEC.